The sequence spans 177 residues: Large ribosomal subunit protein uL6 (177 aa).

This sequence belongs to the universal ribosomal protein uL6 family. In terms of assembly, part of the 50S ribosomal subunit.

Its function is as follows. This protein binds to the 23S rRNA, and is important in its secondary structure. It is located near the subunit interface in the base of the L7/L12 stalk, and near the tRNA binding site of the peptidyltransferase center. This Thioalkalivibrio sulfidiphilus (strain HL-EbGR7) protein is Large ribosomal subunit protein uL6.